Reading from the N-terminus, the 198-residue chain is 7-methyl-GTP pyrophosphatase (198 aa).

D69 functions as the Proton acceptor in the catalytic mechanism.

This sequence belongs to the Maf family. YceF subfamily. A divalent metal cation is required as a cofactor.

The protein resides in the cytoplasm. The catalysed reaction is N(7)-methyl-GTP + H2O = N(7)-methyl-GMP + diphosphate + H(+). Nucleoside triphosphate pyrophosphatase that hydrolyzes 7-methyl-GTP (m(7)GTP). May have a dual role in cell division arrest and in preventing the incorporation of modified nucleotides into cellular nucleic acids. The sequence is that of 7-methyl-GTP pyrophosphatase from Yersinia pseudotuberculosis serotype I (strain IP32953).